The chain runs to 366 residues: UDP-N-acetylenolpyruvoylglucosamine reductase (366 aa).

The region spanning Val-29–Ser-203 is the FAD-binding PCMH-type domain. Arg-177 is a catalytic residue. The active-site Proton donor is the Ser-258. Residue Glu-358 is part of the active site.

Belongs to the MurB family. Requires FAD as cofactor.

Its subcellular location is the cytoplasm. The catalysed reaction is UDP-N-acetyl-alpha-D-muramate + NADP(+) = UDP-N-acetyl-3-O-(1-carboxyvinyl)-alpha-D-glucosamine + NADPH + H(+). Its pathway is cell wall biogenesis; peptidoglycan biosynthesis. In terms of biological role, cell wall formation. This Mycobacterium marinum (strain ATCC BAA-535 / M) protein is UDP-N-acetylenolpyruvoylglucosamine reductase.